Consider the following 100-residue polypeptide: Large ribosomal subunit protein uL23 (100 aa).

Belongs to the universal ribosomal protein uL23 family. In terms of assembly, part of the 50S ribosomal subunit. Contacts protein L29, and trigger factor when it is bound to the ribosome.

In terms of biological role, one of the early assembly proteins it binds 23S rRNA. One of the proteins that surrounds the polypeptide exit tunnel on the outside of the ribosome. Forms the main docking site for trigger factor binding to the ribosome. The protein is Large ribosomal subunit protein uL23 of Thermotoga sp. (strain RQ2).